Reading from the N-terminus, the 374-residue chain is Aminomethyltransferase (374 aa).

This sequence belongs to the GcvT family. In terms of assembly, the glycine cleavage system is composed of four proteins: P, T, L and H.

The enzyme catalyses N(6)-[(R)-S(8)-aminomethyldihydrolipoyl]-L-lysyl-[protein] + (6S)-5,6,7,8-tetrahydrofolate = N(6)-[(R)-dihydrolipoyl]-L-lysyl-[protein] + (6R)-5,10-methylene-5,6,7,8-tetrahydrofolate + NH4(+). The glycine cleavage system catalyzes the degradation of glycine. This chain is Aminomethyltransferase, found in Prochlorococcus marinus (strain MIT 9313).